The chain runs to 256 residues: Pimeloyl-[acyl-carrier protein] methyl ester esterase (256 aa).

One can recognise an AB hydrolase-1 domain in the interval 17–241 (VYLIHGWGAN…KAAHAPFLSH (225 aa)). Residues Trp23, 83–84 (SL), and 145–149 (FLQLQ) contribute to the substrate site. Ser83 acts as the Nucleophile in catalysis. Active-site residues include Asp207 and His235. Residue His235 coordinates substrate.

The protein belongs to the AB hydrolase superfamily. Carboxylesterase BioH family. As to quaternary structure, monomer.

Its subcellular location is the cytoplasm. The catalysed reaction is 6-carboxyhexanoyl-[ACP] methyl ester + H2O = 6-carboxyhexanoyl-[ACP] + methanol + H(+). The protein operates within cofactor biosynthesis; biotin biosynthesis. Functionally, the physiological role of BioH is to remove the methyl group introduced by BioC when the pimeloyl moiety is complete. It allows to synthesize pimeloyl-ACP via the fatty acid synthetic pathway through the hydrolysis of the ester bonds of pimeloyl-ACP esters. This Neisseria meningitidis serogroup C / serotype 2a (strain ATCC 700532 / DSM 15464 / FAM18) protein is Pimeloyl-[acyl-carrier protein] methyl ester esterase.